The chain runs to 261 residues: Enolase-phosphatase E1 (261 aa).

Residues D16 and E18 each contribute to the Mg(2+) site. Residues S153–S154 and K187 contribute to the substrate site. D212 is a binding site for Mg(2+).

Belongs to the HAD-like hydrolase superfamily. MasA/MtnC family. As to quaternary structure, monomer. It depends on Mg(2+) as a cofactor.

The protein localises to the cytoplasm. It is found in the nucleus. The catalysed reaction is 5-methylsulfanyl-2,3-dioxopentyl phosphate + H2O = 1,2-dihydroxy-5-(methylsulfanyl)pent-1-en-3-one + phosphate. It functions in the pathway amino-acid biosynthesis; L-methionine biosynthesis via salvage pathway; L-methionine from S-methyl-5-thio-alpha-D-ribose 1-phosphate: step 3/6. It participates in amino-acid biosynthesis; L-methionine biosynthesis via salvage pathway; L-methionine from S-methyl-5-thio-alpha-D-ribose 1-phosphate: step 4/6. Its function is as follows. Bifunctional enzyme that catalyzes the enolization of 2,3-diketo-5-methylthiopentyl-1-phosphate (DK-MTP-1-P) into the intermediate 2-hydroxy-3-keto-5-methylthiopentenyl-1-phosphate (HK-MTPenyl-1-P), which is then dephosphorylated to form the acireductone 1,2-dihydroxy-3-keto-5-methylthiopentene (DHK-MTPene). The chain is Enolase-phosphatase E1 (enoph1) from Salmo salar (Atlantic salmon).